Reading from the N-terminus, the 660-residue chain is Probable rhamnogalacturonate lyase B (660 aa).

Residues 1–20 form the signal peptide; it reads MRLSVSLGLASLWTAIGATA. N-linked (GlcNAc...) asparagine glycosylation is found at N22, N27, N109, N142, N238, N284, N432, N492, N532, N594, and N635.

It belongs to the polysaccharide lyase 4 family.

The protein resides in the secreted. The enzyme catalyses Endotype eliminative cleavage of L-alpha-rhamnopyranosyl-(1-&gt;4)-alpha-D-galactopyranosyluronic acid bonds of rhamnogalacturonan I domains in ramified hairy regions of pectin leaving L-rhamnopyranose at the reducing end and 4-deoxy-4,5-unsaturated D-galactopyranosyluronic acid at the non-reducing end.. Its function is as follows. Pectinolytic enzymes consist of four classes of enzymes: pectin lyase, polygalacturonase, pectin methylesterase and rhamnogalacturonase. Degrades the rhamnogalacturonan I (RG-I) backbone of pectin. The polypeptide is Probable rhamnogalacturonate lyase B (rglB) (Aspergillus terreus (strain NIH 2624 / FGSC A1156)).